Reading from the N-terminus, the 347-residue chain is Phosphate acyltransferase (347 aa).

This sequence belongs to the PlsX family. In terms of assembly, homodimer. Probably interacts with PlsY.

It localises to the cytoplasm. It catalyses the reaction a fatty acyl-[ACP] + phosphate = an acyl phosphate + holo-[ACP]. It functions in the pathway lipid metabolism; phospholipid metabolism. In terms of biological role, catalyzes the reversible formation of acyl-phosphate (acyl-PO(4)) from acyl-[acyl-carrier-protein] (acyl-ACP). This enzyme utilizes acyl-ACP as fatty acyl donor, but not acyl-CoA. The protein is Phosphate acyltransferase of Rhizobium meliloti (strain 1021) (Ensifer meliloti).